A 140-amino-acid chain; its full sequence is ATP synthase epsilon chain (140 aa).

The protein belongs to the ATPase epsilon chain family. In terms of assembly, F-type ATPases have 2 components, CF(1) - the catalytic core - and CF(0) - the membrane proton channel. CF(1) has five subunits: alpha(3), beta(3), gamma(1), delta(1), epsilon(1). CF(0) has three main subunits: a, b and c.

It localises to the cell inner membrane. Produces ATP from ADP in the presence of a proton gradient across the membrane. The chain is ATP synthase epsilon chain from Xanthomonas oryzae pv. oryzae (strain MAFF 311018).